Consider the following 395-residue polypeptide: Nitrite extrusion protein (395 aa).

12 helical membrane passes run 15–35, 44–64, 73–93, 96–116, 133–153, 160–180, 203–223, 240–262, 271–291, 293–313, 330–350, and 357–377; these read SLVA…QITL, ISLV…PLGY, LMFM…SIAD, FDLI…SIGV, GIYG…PVIA, STVQ…VLFG, VLWF…AFTI, AGLR…GFLA, LMFV…SPTI, LYTF…GTVF, IVSA…ASVF, and AIGF…VIWM.

Belongs to the major facilitator superfamily. Nitrate/nitrite porter (TC 2.A.1.8) family.

The protein localises to the cell membrane. Involved in excretion of nitrite produced by the dissimilatory reduction of nitrate. In Bacillus subtilis (strain 168), this protein is Nitrite extrusion protein (narK).